Here is a 162-residue protein sequence, read N- to C-terminus: NADH-quinone oxidoreductase subunit I (162 aa).

2 consecutive 4Fe-4S ferredoxin-type domains span residues 53-83 and 93-122; these read LRRY…IEAE and TRYD…EGPN. Residues cysteine 63, cysteine 66, cysteine 69, cysteine 73, cysteine 102, cysteine 105, cysteine 108, and cysteine 112 each contribute to the [4Fe-4S] cluster site.

Belongs to the complex I 23 kDa subunit family. In terms of assembly, NDH-1 is composed of 14 different subunits. Subunits NuoA, H, J, K, L, M, N constitute the membrane sector of the complex. Requires [4Fe-4S] cluster as cofactor.

The protein localises to the cell inner membrane. The enzyme catalyses a quinone + NADH + 5 H(+)(in) = a quinol + NAD(+) + 4 H(+)(out). NDH-1 shuttles electrons from NADH, via FMN and iron-sulfur (Fe-S) centers, to quinones in the respiratory chain. The immediate electron acceptor for the enzyme in this species is believed to be ubiquinone. Couples the redox reaction to proton translocation (for every two electrons transferred, four hydrogen ions are translocated across the cytoplasmic membrane), and thus conserves the redox energy in a proton gradient. The chain is NADH-quinone oxidoreductase subunit I from Rhodospirillum centenum (strain ATCC 51521 / SW).